We begin with the raw amino-acid sequence, 283 residues long: Non-selective voltage-gated ion channel VDAC1 (283 aa).

A2 is subject to N-acetylalanine. K12 contributes to the ATP binding site. A Glycyl lysine isopeptide (Lys-Gly) (interchain with G-Cter in ubiquitin) cross-link involves residue K12. A Phosphoserine modification is found at S13. Residue T19 is modified to Phosphothreonine. K20 provides a ligand contact to ATP. K20 carries the post-translational modification N6-acetyllysine; alternate. At K20 the chain carries N6-succinyllysine; alternate. K20 is covalently cross-linked (Glycyl lysine isopeptide (Lys-Gly) (interchain with G-Cter in ubiquitin); alternate). 2 consecutive transmembrane segments (beta stranded) span residues 26 to 35 and 39 to 47; these read LIKLDLKTKS and LEFTSSGSA. Residues K53 and K61 each participate in a glycyl lysine isopeptide (Lys-Gly) (interchain with G-Cter in ubiquitin) cross-link. Residues 54–64 traverse the membrane as a beta stranded segment; sequence VTGSLETKYRW. Phosphotyrosine is present on Y67. A run of 3 beta stranded transmembrane segments spans residues 69 to 76, 80 to 89, and 95 to 104; these read LTFTEKWN, TLGTEITVED, and LKLTFDSSFS. T107 bears the Phosphothreonine mark. K109 bears the N6-acetyllysine; alternate mark. A Glycyl lysine isopeptide (Lys-Gly) (interchain with G-Cter in ubiquitin); alternate cross-link involves residue K109. K110 participates in a covalent cross-link: Glycyl lysine isopeptide (Lys-Gly) (interchain with G-Cter in ubiquitin). A run of 4 beta stranded transmembrane segments spans residues 111-120, 123-130, 137-145, and 150-158; these read NAKIKTGYKR, INLGCDVD, SIRGALVLG, and LAGYQMNFE. K161 is covalently cross-linked (Glycyl lysine isopeptide (Lys-Gly) (interchain with G-Cter in ubiquitin)). A run of 6 beta stranded transmembrane segments spans residues 163-175, 178-185, 189-198, 202-211, 218-227, and 231-238; these read RVTQ…GYKT, FQLHTNVN, EFGGSIYQKV, LETAVNLAWT, RFGIAAKYQI, and ACFSAKVN. S193 carries the phosphoserine; by NEK1 modification. S240 carries the phosphoserine modification. Position 242–244 (242–244) interacts with NAD(+); that stretch reads LIG. A beta stranded membrane pass occupies residues 242 to 251; that stretch reads LIGLGYTQTL. The residue at position 252 (K252) is an N6-acetyllysine. A beta stranded membrane pass occupies residues 254–263; it reads GIKLTLSALL. 260–264 contributes to the NAD(+) binding site; sequence SALLD. K266 is modified (N6-acetyllysine; alternate). K266 participates in a covalent cross-link: Glycyl lysine isopeptide (Lys-Gly) (interchain with G-Cter in ubiquitin); alternate. A beta stranded membrane pass occupies residues 273–282; sequence HKLGLGLEFQ. A Glycyl lysine isopeptide (Lys-Gly) (interchain with G-Cter in ubiquitin) cross-link involves residue K274.

The protein belongs to the eukaryotic mitochondrial porin family. In terms of assembly, homodimer and homotrimer; in response to cyclic AMP or calcium; oligomerization is required for scramblase activity. Component of the mitochondrial permeability transition pore complex (mPTPC), at least composed of SPG7, VDAC1 and PPIF. Interacts with SPG7, NIPSNAP2 and SLC25A30. Interacts with hexokinases including HK1. The HK1-VDAC1 complex interacts with ATF2. Interacts with BCL2L1. Interacts with BAK1. Interacts with RTL10/BOP (via BH3 domain). Interacts with amyloid-beta and APP; induces VDAC1 dephosphorylation. Interacts with TMEM41B. Interacts with BCAP31. Interacts with HSPA9; this interaction couples ITPR1 to VDAC1. Post-translationally, phosphorylation at Ser-193 by NEK1 promotes the closed conformational state preventing excessive mitochondrial membrane permeability and subsequent apoptotic cell death after injury. Phosphorylation by the AKT-GSK3B axis stabilizes the protein probably by preventing ubiquitin-mediated proteasomal degradation. In terms of processing, ubiquitinated. Undergoes monoubiquitination and polyubiquitination by PRKN; monoubiquitination at Lys-274 inhibits apoptosis, whereas polyubiquitination leads to its degradation and promotes mitophagy. Deubiquitinated by USP30. Predominantly in brain astrocytes.

The protein resides in the mitochondrion outer membrane. It is found in the cell membrane. It localises to the membrane raft. It carries out the reaction chloride(in) = chloride(out). It catalyses the reaction K(+)(in) = K(+)(out). The catalysed reaction is ATP(in) = ATP(out). The enzyme catalyses Ca(2+)(in) = Ca(2+)(out). It carries out the reaction Na(+)(in) = Na(+)(out). It catalyses the reaction Mg(2+)(in) = Mg(2+)(out). The catalysed reaction is L-glutamate(out) = L-glutamate(in). The enzyme catalyses dopamine(out) = dopamine(in). It carries out the reaction acetylcholine(in) = acetylcholine(out). It catalyses the reaction Fe(III)-[cytochrome c](out) = Fe(III)-[cytochrome c](in). The catalysed reaction is a 1,2-diacyl-sn-glycero-3-phosphocholine(in) = a 1,2-diacyl-sn-glycero-3-phosphocholine(out). The enzyme catalyses a 1,2-diacyl-sn-glycero-3-phospho-L-serine(in) = a 1,2-diacyl-sn-glycero-3-phospho-L-serine(out). With respect to regulation, inhibited by nitric oxide. Its function is as follows. Non-selective voltage-gated ion channel that mediates the transport of anions and cations through the mitochondrion outer membrane and plasma membrane. The channel at the outer mitochondrial membrane allows diffusion of small hydrophilic molecules; in the plasma membrane it is involved in cell volume regulation and apoptosis. It adopts an open conformation at low or zero membrane potential and a closed conformation at potentials above 30-40 mV. The open state has a weak anion selectivity whereas the closed state is cation-selective. Binds various signaling molecules, including the sphingolipid ceramide, the phospholipid phosphatidylcholine, and the sterols cholesterol and oxysterol. In depolarized mitochondria, acts downstream of PRKN and PINK1 to promote mitophagy or prevent apoptosis; polyubiquitination by PRKN promotes mitophagy, while monoubiquitination by PRKN decreases mitochondrial calcium influx which ultimately inhibits apoptosis. May participate in the formation of the permeability transition pore complex (PTPC) responsible for the release of mitochondrial products that triggers apoptosis. May mediate ATP export from cells. Part of a complex composed of HSPA9, ITPR1 and VDAC1 that regulates mitochondrial calcium-dependent apoptosis by facilitating calcium transport from the ER lumen to the mitochondria intermembrane space thus providing calcium for the downstream calcium channel MCU that directly releases it into mitochondria matrix. Mediates cytochrome c efflux. Functionally, catalyzes the scrambling of phospholipids across the outer mitochondrial membrane; the mechanism is unrelated to channel activity and is capable of translocating both anionic and zwitterionic phospholipids. The sequence is that of Non-selective voltage-gated ion channel VDAC1 from Bos taurus (Bovine).